Consider the following 299-residue polypeptide: ATP phosphoribosyltransferase (299 aa).

This sequence belongs to the ATP phosphoribosyltransferase family. Long subfamily. Mg(2+) serves as cofactor.

The protein resides in the cytoplasm. The catalysed reaction is 1-(5-phospho-beta-D-ribosyl)-ATP + diphosphate = 5-phospho-alpha-D-ribose 1-diphosphate + ATP. Its pathway is amino-acid biosynthesis; L-histidine biosynthesis; L-histidine from 5-phospho-alpha-D-ribose 1-diphosphate: step 1/9. With respect to regulation, feedback inhibited by histidine. Functionally, catalyzes the condensation of ATP and 5-phosphoribose 1-diphosphate to form N'-(5'-phosphoribosyl)-ATP (PR-ATP). Has a crucial role in the pathway because the rate of histidine biosynthesis seems to be controlled primarily by regulation of HisG enzymatic activity. This chain is ATP phosphoribosyltransferase, found in Shewanella woodyi (strain ATCC 51908 / MS32).